A 361-amino-acid chain; its full sequence is Phosphoserine aminotransferase (361 aa).

Residue arginine 43 participates in L-glutamate binding. Pyridoxal 5'-phosphate contacts are provided by residues 77–78, tryptophan 103, threonine 153, aspartate 173, and glutamine 196; that span reads AS. The residue at position 197 (lysine 197) is an N6-(pyridoxal phosphate)lysine. 238–239 is a pyridoxal 5'-phosphate binding site; it reads NT.

Belongs to the class-V pyridoxal-phosphate-dependent aminotransferase family. SerC subfamily. As to quaternary structure, homodimer. Pyridoxal 5'-phosphate is required as a cofactor.

It localises to the cytoplasm. The enzyme catalyses O-phospho-L-serine + 2-oxoglutarate = 3-phosphooxypyruvate + L-glutamate. It catalyses the reaction 4-(phosphooxy)-L-threonine + 2-oxoglutarate = (R)-3-hydroxy-2-oxo-4-phosphooxybutanoate + L-glutamate. It participates in amino-acid biosynthesis; L-serine biosynthesis; L-serine from 3-phospho-D-glycerate: step 2/3. The protein operates within cofactor biosynthesis; pyridoxine 5'-phosphate biosynthesis; pyridoxine 5'-phosphate from D-erythrose 4-phosphate: step 3/5. Catalyzes the reversible conversion of 3-phosphohydroxypyruvate to phosphoserine and of 3-hydroxy-2-oxo-4-phosphonooxybutanoate to phosphohydroxythreonine. The chain is Phosphoserine aminotransferase from Azotobacter vinelandii (strain DJ / ATCC BAA-1303).